The chain runs to 100 residues: MLSLNYGFTISIILFFIGIISLLIHKNLIFILVSLEVLINSIILGFILIGKYWKQIDCCVLYIFIVTIATVEVSVMLAIFLRIYQRYHTLDIYKLREISK.

3 consecutive transmembrane segments (helical) span residues 4–24 (LNYGFTISIILFFIGIISLLI), 29–49 (IFILVSLEVLINSIILGFILI), and 60–80 (VLYIFIVTIATVEVSVMLAIF).

It belongs to the complex I subunit 4L family. In terms of assembly, NDH-1 is composed of 13 different subunits. Subunits NuoA, H, J, K, L, M, N constitute the membrane sector of the complex.

Its subcellular location is the cell membrane. It catalyses the reaction a quinone + NADH + 5 H(+)(in) = a quinol + NAD(+) + 4 H(+)(out). In terms of biological role, NDH-1 shuttles electrons from NADH, via FMN and iron-sulfur (Fe-S) centers, to quinones in the respiratory chain. The immediate electron acceptor for the enzyme in this species is believed to be ubiquinone. Couples the redox reaction to proton translocation (for every two electrons transferred, four hydrogen ions are translocated across the cytoplasmic membrane), and thus conserves the redox energy in a proton gradient. This is NADH-quinone oxidoreductase subunit K from Buchnera aphidicola subsp. Cinara cedri (strain Cc).